A 110-amino-acid chain; its full sequence is NADH-quinone oxidoreductase subunit K (110 aa).

A run of 3 helical transmembrane segments spans residues 13 to 33 (VTHGLIFSTLLFVISVAGIII), 38 to 58 (ILILLMSIELMLLAVNTNFLI), and 70 to 90 (VFVFFIMAVAAAETAIGLAIV).

Belongs to the complex I subunit 4L family. In terms of assembly, NDH-1 is composed of 14 different subunits. Subunits NuoA, H, J, K, L, M, N constitute the membrane sector of the complex.

The protein resides in the cell inner membrane. The catalysed reaction is a quinone + NADH + 5 H(+)(in) = a quinol + NAD(+) + 4 H(+)(out). Its function is as follows. NDH-1 shuttles electrons from NADH, via FMN and iron-sulfur (Fe-S) centers, to quinones in the respiratory chain. The immediate electron acceptor for the enzyme in this species is believed to be ubiquinone. Couples the redox reaction to proton translocation (for every two electrons transferred, four hydrogen ions are translocated across the cytoplasmic membrane), and thus conserves the redox energy in a proton gradient. The chain is NADH-quinone oxidoreductase subunit K from Francisella tularensis subsp. tularensis (strain FSC 198).